Reading from the N-terminus, the 122-residue chain is Large ribosomal subunit protein uL18 (122 aa).

Positions 1-20 (MFKKVSKNANRLSRHQRVRN) are disordered.

The protein belongs to the universal ribosomal protein uL18 family. As to quaternary structure, part of the 50S ribosomal subunit; part of the 5S rRNA/L5/L18/L25 subcomplex. Contacts the 5S and 23S rRNAs.

This is one of the proteins that bind and probably mediate the attachment of the 5S RNA into the large ribosomal subunit, where it forms part of the central protuberance. This Alkaliphilus oremlandii (strain OhILAs) (Clostridium oremlandii (strain OhILAs)) protein is Large ribosomal subunit protein uL18.